Here is an 81-residue protein sequence, read N- to C-terminus: MNVEHEVSLLIDEIRRLGSKNADGKTSVKFGVLFNDDQCANLFEALVGTLKAAKRKKVITFDGELLLQGVHDNVDVVLLQD.

It belongs to the costars family.

This is Costars family protein ABRACL (abracl) from Danio rerio (Zebrafish).